We begin with the raw amino-acid sequence, 188 residues long: Elongation factor P (188 aa).

This sequence belongs to the elongation factor P family.

The protein resides in the cytoplasm. The protein operates within protein biosynthesis; polypeptide chain elongation. Its function is as follows. Involved in peptide bond synthesis. Stimulates efficient translation and peptide-bond synthesis on native or reconstituted 70S ribosomes in vitro. Probably functions indirectly by altering the affinity of the ribosome for aminoacyl-tRNA, thus increasing their reactivity as acceptors for peptidyl transferase. This Rickettsia rickettsii (strain Iowa) protein is Elongation factor P.